An 89-amino-acid polypeptide reads, in one-letter code: Putative regulatory protein CLL_A1210 (89 aa).

It belongs to the RemA family.

This Clostridium botulinum (strain Eklund 17B / Type B) protein is Putative regulatory protein CLL_A1210.